Here is a 72-residue protein sequence, read N- to C-terminus: Protein SlyX (72 aa).

Belongs to the SlyX family.

The polypeptide is Protein SlyX (Cronobacter sakazakii (strain ATCC BAA-894) (Enterobacter sakazakii)).